The primary structure comprises 837 residues: Tuftelin-interacting protein 11 (837 aa).

Basic and acidic residues-rich tracts occupy residues 1-13 (MSLSHLYRDGEGR) and 53-64 (VWAERDSDDERP). 3 disordered regions span residues 1 to 21 (MSLSHLYRDGEGRIDDDDDER), 53 to 72 (VWAERDSDDERPSFGGKRAR), and 85 to 133 (LKKG…KGFA). Residues S2, S59, and S98 each carry the phosphoserine modification. A compositionally biased stretch (acidic residues) spans 91 to 102 (EEAELEDSDDEE). Residues 103–116 (RPVKQDDFPKDFGP) are compositionally biased toward basic and acidic residues. Phosphoserine is present on S144. One can recognise a G-patch domain in the interval 149 to 195 (TKGIGQKLLQKMGYVPGRGLGKNAQGIINPIEAKQRKGKGAVGAYGS). Positions 179 to 236 (IEAKQRKGKGAVGAYGSERTTQSMQDFPVVDSEEEAEEEFQKGLSQWRKDPSGSKKKP) are disordered. S210 bears the Phosphoserine mark. The short motif at 700 to 705 (VKDKFN) is the Nuclear localization signal element. Residues 710–734 (IMNRAVSSNVGAYMQPGARENIAYL) form a required for nuclear speckle localization region.

Belongs to the TFP11/STIP family. Identified in the spliceosome C complex. Found in the Intron Large (IL) complex, a post-mRNA release spliceosomal complex containing the excised intron, U2, U5 and U6 snRNPs, and splicing factors. Interacts with TUFT1. Interacts with DHX15; indicative for a recruitment of DHX15 to the IL complex. Interacts with GCFC2.

The protein localises to the cytoplasm. It is found in the nucleus. Its function is as follows. Involved in pre-mRNA splicing, specifically in spliceosome disassembly during late-stage splicing events. Intron turnover seems to proceed through reactions in two lariat-intron associated complexes termed Intron Large (IL) and Intron Small (IS). In cooperation with DHX15 seems to mediate the transition of the U2, U5 and U6 snRNP-containing IL complex to the snRNP-free IS complex leading to efficient debranching and turnover of excised introns. May play a role in the differentiation of ameloblasts and odontoblasts or in the forming of the enamel extracellular matrix. This Macaca fascicularis (Crab-eating macaque) protein is Tuftelin-interacting protein 11 (TFIP11).